An 81-amino-acid chain; its full sequence is uncharacterized protein (81 aa).

This is an uncharacterized protein from Archaeoglobus fulgidus (strain ATCC 49558 / DSM 4304 / JCM 9628 / NBRC 100126 / VC-16).